A 95-amino-acid polypeptide reads, in one-letter code: Large ribosomal subunit protein bL27 (95 aa).

The propeptide occupies 1–6 (MFLQLF).

The protein belongs to the bacterial ribosomal protein bL27 family. Post-translationally, the N-terminus is cleaved by ribosomal processing cysteine protease Prp.

In Symbiobacterium thermophilum (strain DSM 24528 / JCM 14929 / IAM 14863 / T), this protein is Large ribosomal subunit protein bL27.